A 246-amino-acid chain; its full sequence is Complement C1q tumor necrosis factor-related protein 3 (246 aa).

Positions 1 to 22 (MLWRQLIYWQLLALFFLPFCLC) are cleaved as a signal peptide. Positions 51-113 (GYQGPPGPPG…KGEKGYPGIP (63 aa)) constitute a Collagen-like domain. The tract at residues 53–110 (QGPPGPPGPPGIPGNHGNNGNNGATGHEGAKGEKGDKGDLGPRGERGQHGPKGEKGYP) is disordered. Residues 55–64 (PPGPPGPPGI) show a composition bias toward pro residues. The span at 65 to 74 (PGNHGNNGNN) shows a compositional bias: low complexity. N-linked (GlcNAc...) asparagine glycosylation occurs at Asn-70. Basic and acidic residues predominate over residues 80-107 (EGAKGEKGDKGDLGPRGERGQHGPKGEK). The C1q domain occupies 113 to 246 (PPELQIAFMA…FAGFLLFETK (134 aa)).

Post-translationally, glycosylated on Asn-70. Expressed in colon and small intestine.

It is found in the secreted. The chain is Complement C1q tumor necrosis factor-related protein 3 (C1QTNF3) from Homo sapiens (Human).